Reading from the N-terminus, the 1488-residue chain is Chromosome partition protein MukB (1488 aa).

34 to 41 (GGNGAGKS) provides a ligand contact to ATP. 3 coiled-coil regions span residues 326 to 418 (LEAD…QYNQ), 444 to 472 (LDTFQAKEQEATEKLLSLEQKMSVAQTAH), and 509 to 602 (RHLA…QRAP). A flexible hinge region spans residues 666 to 783 (PGGAEDQRLN…SLPIFGRAAR (118 aa)). 3 coiled-coil regions span residues 835–923 (EAEI…AKLE), 977–1116 (EMLS…AKAG), and 1209–1265 (VEAI…LQSV).

The protein belongs to the SMC family. MukB subfamily. In terms of assembly, homodimerization via its hinge domain. Binds to DNA via its C-terminal region. Interacts, and probably forms a ternary complex, with MukE and MukF via its C-terminal region. The complex formation is stimulated by calcium or magnesium. Interacts with tubulin-related protein FtsZ.

The protein resides in the cytoplasm. Its subcellular location is the nucleoid. Plays a central role in chromosome condensation, segregation and cell cycle progression. Functions as a homodimer, which is essential for chromosome partition. Involved in negative DNA supercoiling in vivo, and by this means organize and compact chromosomes. May achieve or facilitate chromosome segregation by condensation DNA from both sides of a centrally located replisome during cell division. This Salmonella paratyphi B (strain ATCC BAA-1250 / SPB7) protein is Chromosome partition protein MukB.